The sequence spans 158 residues: MSNNIPLTKESYEALQEELKRLIREERPKVIQDIAEARSHGDLSENAEYDAAKNRQGFIEGRIQELQGKLARAHVVDLTGLKPDKVVFGATVTLYDTASEEEITYKIVGEDEADIKLGKISCTSPVGKALIGHKLDDSVKVKVPAGTKEYEIIEIKYE.

Positions 1–67 (MSNNIPLTKE…FIEGRIQELQ (67 aa)) form a coiled coil.

This sequence belongs to the GreA/GreB family.

Functionally, necessary for efficient RNA polymerase transcription elongation past template-encoded arresting sites. The arresting sites in DNA have the property of trapping a certain fraction of elongating RNA polymerases that pass through, resulting in locked ternary complexes. Cleavage of the nascent transcript by cleavage factors such as GreA or GreB allows the resumption of elongation from the new 3'terminus. GreA releases sequences of 2 to 3 nucleotides. In Trichlorobacter lovleyi (strain ATCC BAA-1151 / DSM 17278 / SZ) (Geobacter lovleyi), this protein is Transcription elongation factor GreA.